A 312-amino-acid chain; its full sequence is DNA-directed RNA polymerase subunit alpha (312 aa).

Positions 1-226 are alpha N-terminal domain (alpha-NTD); that stretch reads MIEFEKPNIT…EHFKVFESAD (226 aa). The interval 243 to 312 is alpha C-terminal domain (alpha-CTD); sequence KEKKLEMTIE…DLGLSLRQED (70 aa).

Belongs to the RNA polymerase alpha chain family. Homodimer. The RNAP catalytic core consists of 2 alpha, 1 beta, 1 beta' and 1 omega subunit. When a sigma factor is associated with the core the holoenzyme is formed, which can initiate transcription.

It carries out the reaction RNA(n) + a ribonucleoside 5'-triphosphate = RNA(n+1) + diphosphate. In terms of biological role, DNA-dependent RNA polymerase catalyzes the transcription of DNA into RNA using the four ribonucleoside triphosphates as substrates. This is DNA-directed RNA polymerase subunit alpha from Lactobacillus acidophilus (strain ATCC 700396 / NCK56 / N2 / NCFM).